The following is a 148-amino-acid chain: Glutamate mutase sigma subunit (148 aa).

One can recognise a B12-binding domain in the interval Asn3–Ser140. Adenosylcob(III)alamin contacts are provided by residues Ala13–Ala17, His16, Ser61–Ile63, and Asn93–Gly97.

This sequence belongs to the methylaspartate mutase GlmS subunit family. Heterotetramer composed of 2 epsilon subunits (GlmE) and 2 sigma subunits (GlmS). GlmE exists as a homodimer and GlmS as a monomer. The cofactor is adenosylcob(III)alamin.

It carries out the reaction (2S,3S)-3-methyl-L-aspartate = L-glutamate. Its pathway is amino-acid degradation; L-glutamate degradation via mesaconate pathway; acetate and pyruvate from L-glutamate: step 1/4. Its function is as follows. Catalyzes the carbon skeleton rearrangement of L-glutamate to L-threo-3-methylaspartate ((2S,3S)-3-methylaspartate). The chain is Glutamate mutase sigma subunit from Yersinia enterocolitica serotype O:8 / biotype 1B (strain NCTC 13174 / 8081).